Here is a 135-residue protein sequence, read N- to C-terminus: Cytochrome b5, seed isoform (135 aa).

Residues 5 to 81 (SKVFTLAEVS…LDEYYVGDID (77 aa)) enclose the Cytochrome b5 heme-binding domain. Residues H40 and H64 each coordinate heme. A helical membrane pass occupies residues 107-127 (FIVKLLQFLVPLIILGVAFGV).

Belongs to the cytochrome b5 family. In terms of tissue distribution, specifically expressed in developing seeds.

Its subcellular location is the endoplasmic reticulum membrane. It localises to the microsome membrane. Functionally, cytochrome b5 is a membrane bound hemoprotein which function as an electron carrier for several membrane bound oxygenases. May play a key role in the modification by desaturation of fatty acids in the endoplasmic reticulum, which in the developing seed is utilized for membrane synthesis and in the developmentally regulated production of large amounts of storage lipids. The chain is Cytochrome b5, seed isoform from Nicotiana tabacum (Common tobacco).